The sequence spans 207 residues: Large ribosomal subunit protein uL4 (207 aa).

It belongs to the universal ribosomal protein uL4 family. Part of the 50S ribosomal subunit.

Functionally, one of the primary rRNA binding proteins, this protein initially binds near the 5'-end of the 23S rRNA. It is important during the early stages of 50S assembly. It makes multiple contacts with different domains of the 23S rRNA in the assembled 50S subunit and ribosome. Forms part of the polypeptide exit tunnel. In Rickettsia conorii (strain ATCC VR-613 / Malish 7), this protein is Large ribosomal subunit protein uL4.